Reading from the N-terminus, the 276-residue chain is 2-dehydro-3-deoxyphosphooctonate aldolase (276 aa).

This sequence belongs to the KdsA family.

The protein resides in the cytoplasm. It catalyses the reaction D-arabinose 5-phosphate + phosphoenolpyruvate + H2O = 3-deoxy-alpha-D-manno-2-octulosonate-8-phosphate + phosphate. Its pathway is carbohydrate biosynthesis; 3-deoxy-D-manno-octulosonate biosynthesis; 3-deoxy-D-manno-octulosonate from D-ribulose 5-phosphate: step 2/3. It functions in the pathway bacterial outer membrane biogenesis; lipopolysaccharide biosynthesis. This is 2-dehydro-3-deoxyphosphooctonate aldolase from Xanthomonas axonopodis pv. citri (strain 306).